The following is a 244-amino-acid chain: 27 kDa core protein (244 aa).

It belongs to the chordopoxvirinae D3 family.

The protein localises to the virion. Its function is as follows. Late protein which is part of a large complex required for early virion morphogenesis. This complex participates in the formation of virosomes and the incorporation of virosomal contents into nascent immature virions. This Swinepox virus (strain Swine/Nebraska/17077-99/1999) (SWPV) protein is 27 kDa core protein.